The primary structure comprises 538 residues: Phosphoenolpyruvate carboxykinase (ATP) (538 aa).

Positions 64, 205, and 211 each coordinate substrate. ATP is bound by residues Lys211, His230, and 246–254 (GLSGTGKTT). Mn(2+) is bound by residues Lys211 and His230. Mn(2+) is bound at residue Asp267. ATP contacts are provided by residues Glu295, Arg331, 447-448 (RI), and Thr453. Position 331 (Arg331) interacts with substrate.

It belongs to the phosphoenolpyruvate carboxykinase (ATP) family. Monomer. Mn(2+) is required as a cofactor.

The protein resides in the cytoplasm. It carries out the reaction oxaloacetate + ATP = phosphoenolpyruvate + ADP + CO2. The protein operates within carbohydrate biosynthesis; gluconeogenesis. Involved in the gluconeogenesis. Catalyzes the conversion of oxaloacetate (OAA) to phosphoenolpyruvate (PEP) through direct phosphoryl transfer between the nucleoside triphosphate and OAA. The polypeptide is Phosphoenolpyruvate carboxykinase (ATP) (Haemophilus influenzae (strain PittEE)).